Consider the following 271-residue polypeptide: Putative carboxymethylenebutenolidase (271 aa).

Residues Cys-147, Asp-204, and His-236 contribute to the active site.

Belongs to the dienelactone hydrolase family.

It carries out the reaction 2-(5-oxo-2,5-dihydrofuran-2-ylidene)acetate + H2O = 4-oxohex-2-enedioate + H(+). The polypeptide is Putative carboxymethylenebutenolidase (ysgA) (Escherichia coli (strain K12)).